Here is an 82-residue protein sequence, read N- to C-terminus: MKKILLSLVVFYQRFISPLTPPTCRFYPTCSQYTREAIEYHGALKGLYLGVRRILKCHPLHKGGFDPVPLKKDKNSKTTHHH.

The interval 63 to 82 is disordered; it reads GGFDPVPLKKDKNSKTTHHH.

This sequence belongs to the UPF0161 family.

It is found in the cell membrane. Functionally, could be involved in insertion of integral membrane proteins into the membrane. The polypeptide is Putative membrane protein insertion efficiency factor (Staphylococcus epidermidis (strain ATCC 35984 / DSM 28319 / BCRC 17069 / CCUG 31568 / BM 3577 / RP62A)).